We begin with the raw amino-acid sequence, 152 residues long: MRRCLRVKTRRGQLGLASGCFEQHSCFSPRVNRILSAVQNTPCAGPSSQAPPQPPQASPPAAPDHSRTPSLLASSHSASGGESLFQLYMASLAWPQNCCVLESCRRIPLGGLSSMENRRPLLRKGRLLRGQIHHGQDNQLWGLTGAGALLSG.

A disordered region spans residues 41-77; that stretch reads TPCAGPSSQAPPQPPQASPPAAPDHSRTPSLLASSHS. Residues 49–62 show a composition bias toward pro residues; it reads QAPPQPPQASPPAA.

In Macaca fascicularis (Crab-eating macaque), this protein is Smith-Magenis syndrome chromosomal region candidate gene 5 protein homolog (SMCR5).